The chain runs to 83 residues: Gas vesicle protein G2 (83 aa).

The protein belongs to the gas vesicle GvpG family. In terms of assembly, gvpF to GvpM interact with each other in vitro, and may form multi-subunit complex(es).

The protein resides in the gas vesicle. Its function is as follows. Proteins GvpF to GvpM might be involved in nucleating gas vesicle formation. A minor component of the gas vesicle. Gas vesicles are hollow, gas filled proteinaceous nanostructures found in several microbial planktonic microorganisms. They allow positioning of halobacteria at the optimal depth for growth in the poorly aerated, shallow brine pools of their habitat. Expression of 2 c-vac DNA fragments containing 2 divergently transcribed regions (gvpE-gvpF-gvpG-gvpH-gvpI-gvpJ-gvpK-gvpL-gvpM and gvpA-gvpC-gvpN-gvpO) allows H.volcanii to produce gas vesicles. The sequence is that of Gas vesicle protein G2 from Halobacterium salinarum (strain ATCC 700922 / JCM 11081 / NRC-1) (Halobacterium halobium).